The sequence spans 381 residues: 40-kDa huntingtin-associated protein (381 aa).

At A2 the chain carries N-acetylalanine. A Nuclear localization signal motif is present at residues 34–36 (KKR). Positions 213–260 (EHGGHPVQQPELPQQLPSVPQPSLPGPQPRPVLGSTLPLPLPPDHAPG) are disordered. The segment covering 218 to 230 (PVQQPELPQQLPS) has biased composition (low complexity). The span at 231 to 242 (VPQPSLPGPQPR) shows a compositional bias: pro residues.

Interacts with HTT (via C-terminus). Interacts with RAB5A. Found in a complex with F8A1/F8A2/F8A3, HTT and RAB5A; mediates the recruitment of HTT by RAB5A onto early endosomes.

It localises to the cytoplasm. Its subcellular location is the nucleus. The protein resides in the early endosome. The protein localises to the nuclear body. RAB5A effector molecule that is involved in vesicular trafficking of early endosomes. Mediates the recruitment of HTT by RAB5A onto early endosomes. The HTT-F8A1/F8A2/F8A3-RAB5A complex stimulates early endosomal interaction with actin filaments and inhibits interaction with microtubules, leading to the reduction of endosome motility. In Rattus norvegicus (Rat), this protein is 40-kDa huntingtin-associated protein (F8a1).